We begin with the raw amino-acid sequence, 207 residues long: ATP phosphoribosyltransferase (207 aa).

Belongs to the ATP phosphoribosyltransferase family. Short subfamily. In terms of assembly, heteromultimer composed of HisG and HisZ subunits.

It localises to the cytoplasm. It catalyses the reaction 1-(5-phospho-beta-D-ribosyl)-ATP + diphosphate = 5-phospho-alpha-D-ribose 1-diphosphate + ATP. Its pathway is amino-acid biosynthesis; L-histidine biosynthesis; L-histidine from 5-phospho-alpha-D-ribose 1-diphosphate: step 1/9. Its function is as follows. Catalyzes the condensation of ATP and 5-phosphoribose 1-diphosphate to form N'-(5'-phosphoribosyl)-ATP (PR-ATP). Has a crucial role in the pathway because the rate of histidine biosynthesis seems to be controlled primarily by regulation of HisG enzymatic activity. This is ATP phosphoribosyltransferase (hisG) from Dictyoglomus turgidum (strain DSM 6724 / Z-1310).